The primary structure comprises 947 residues: MTPLSSPLSQYWQTVVERLPEGFTETSLSAQAKSVLTFSDFALDSVIAHPEWLAELESASPQADEWRHYAGWLQEALAGVCDDASLMRELRFFRRRIMVRIAWAQTLSLVDDETILQQLSHLAETLIVGARDWLYAACCREWGTPCNPQGVPQPLLILGMGKLGGGELNFSSDIDLIFAWPEHGETRGGRRELDNAQFFTRLGQRLIKALDQPTMDGFVYRVDMRLRPFGDSGPLVLSFAALEDYYQEQGRDWERYAMVKARLMGDNDDAWSRELRAMLRPFVFRRYIDFSVIQSLRNMKGMIAREVRRRGLKDNIKLGAGGIREIEFIVQVFQLIRGGREPSLQSRSLLPTLDAIAALHLLPENDVAQLRVAYLFLRRLENLLQSINDEQTQTLPADDLNRARLAWGMKAENWPQLVGELTDHMANVRRVFNELIGDDEADTPQEEERSEPWREVWQDALQEDDSTPVLAHLADEDRRQVLTLIADFRKELDKRPIGPRGRQVLDQLMPHLLADVCSREDAVVTLSRITPLLAGIVTRTTYLELLSEFPGALKHLIMLCAASPMIASQLARYPLLLDELLDPGTLYQPTATDAYRDELRQYLLRVPEEDEEQQLEALRQFKQAQLLRIAAADIAGTLPVMKVSDHLTWLAEAMIDAVVQQAWTQMVARYGQPAHLDERQGRGFAVVGYGKLGGWELGYSSDLDLIFLHDCPMDVMTNGEREIDGRQFYLRLAQRIMHLFSTRTSSGILYEVDARLRPSGAAGMLVTSADAFADYQQHEAWTWEHQALVRARVVYGDPQLTSQFDAVRRTIMTTARDGKTLQTEVREMREKMRAHLGNKHRDRFDIKADEGGITDIEFIAQYLVLRYAHEKPKLTRWSDNVRILELLAQNGIMDDHEAQALTVAYTTLRDELHHLALQELPGHVAQTCFSKERALVQASWRKWLVAV.

The interval 1–440 (MTPLSSPLSQ…VFNELIGDDE (440 aa)) is adenylyl removase. The interval 450–947 (SEPWREVWQD…ASWRKWLVAV (498 aa)) is adenylyl transferase.

It belongs to the GlnE family. Mg(2+) serves as cofactor.

The catalysed reaction is [glutamine synthetase]-O(4)-(5'-adenylyl)-L-tyrosine + phosphate = [glutamine synthetase]-L-tyrosine + ADP. The enzyme catalyses [glutamine synthetase]-L-tyrosine + ATP = [glutamine synthetase]-O(4)-(5'-adenylyl)-L-tyrosine + diphosphate. In terms of biological role, involved in the regulation of glutamine synthetase GlnA, a key enzyme in the process to assimilate ammonia. When cellular nitrogen levels are high, the C-terminal adenylyl transferase (AT) inactivates GlnA by covalent transfer of an adenylyl group from ATP to specific tyrosine residue of GlnA, thus reducing its activity. Conversely, when nitrogen levels are low, the N-terminal adenylyl removase (AR) activates GlnA by removing the adenylyl group by phosphorolysis, increasing its activity. The regulatory region of GlnE binds the signal transduction protein PII (GlnB) which indicates the nitrogen status of the cell. This Salmonella heidelberg (strain SL476) protein is Bifunctional glutamine synthetase adenylyltransferase/adenylyl-removing enzyme.